We begin with the raw amino-acid sequence, 318 residues long: Transaldolase (318 aa).

Lys132 serves as the catalytic Schiff-base intermediate with substrate.

The protein belongs to the transaldolase family. Type 1 subfamily. In terms of assembly, homodimer.

Its subcellular location is the cytoplasm. The enzyme catalyses D-sedoheptulose 7-phosphate + D-glyceraldehyde 3-phosphate = D-erythrose 4-phosphate + beta-D-fructose 6-phosphate. Its pathway is carbohydrate degradation; pentose phosphate pathway; D-glyceraldehyde 3-phosphate and beta-D-fructose 6-phosphate from D-ribose 5-phosphate and D-xylulose 5-phosphate (non-oxidative stage): step 2/3. Its function is as follows. Transaldolase is important for the balance of metabolites in the pentose-phosphate pathway. This is Transaldolase from Hamiltonella defensa subsp. Acyrthosiphon pisum (strain 5AT).